The primary structure comprises 254 residues: MTQAFTVVIPARYASTRLPGKPLQDIAGQPMIQRVWNQARKSAASRVVIATDDERILAACQGFGAEVLLTRADHNSGTDRLEEVASRLGLAADAIVVNVQGDEPLIPPALIDQVAANLAAHPESAIATLAEPIHDVAALFNPNVVKVATDVNGLALTFSRAPLPWARDAFAGDRDSLPDGVPYRRHIGIYAYRVGFLADFVAWGPCWLENTESLEQLRALWHGVRIHVADARETMLPGVDTPEDLERVRRVLGG.

This sequence belongs to the KdsB family.

The protein resides in the cytoplasm. The enzyme catalyses 3-deoxy-alpha-D-manno-oct-2-ulosonate + CTP = CMP-3-deoxy-beta-D-manno-octulosonate + diphosphate. Its pathway is nucleotide-sugar biosynthesis; CMP-3-deoxy-D-manno-octulosonate biosynthesis; CMP-3-deoxy-D-manno-octulosonate from 3-deoxy-D-manno-octulosonate and CTP: step 1/1. The protein operates within bacterial outer membrane biogenesis; lipopolysaccharide biosynthesis. Functionally, activates KDO (a required 8-carbon sugar) for incorporation into bacterial lipopolysaccharide in Gram-negative bacteria. The sequence is that of 3-deoxy-manno-octulosonate cytidylyltransferase from Pseudomonas paraeruginosa (strain DSM 24068 / PA7) (Pseudomonas aeruginosa (strain PA7)).